The primary structure comprises 281 residues: Probable replication-associated protein repA1 (281 aa).

The protein belongs to the IncFII RepA family.

This protein is essential for plasmid replication; it is involved in copy control functions. The sequence is that of Probable replication-associated protein repA1 (repA1) from Buchnera aphidicola subsp. Cinara cedri (strain Cc).